We begin with the raw amino-acid sequence, 354 residues long: Mycothiol acetyltransferase (354 aa).

Over residues 1–18 (MMVDNQTPDSSTLSTAST) the composition is skewed to polar residues. The disordered stretch occupies residues 1-21 (MMVDNQTPDSSTLSTASTPVY). N-acetyltransferase domains follow at residues 21–176 (YAEP…QTRE) and 191–354 (LRMR…EPAA). E52 is a 1D-myo-inositol 2-(L-cysteinylamino)-2-deoxy-alpha-D-glucopyranoside binding site. 101–103 (AAV) is a binding site for acetyl-CoA. E217, K259, and E274 together coordinate 1D-myo-inositol 2-(L-cysteinylamino)-2-deoxy-alpha-D-glucopyranoside. Residues 278–280 (VGV) and 285–291 (QGGGLGR) contribute to the acetyl-CoA site. Y318 serves as a coordination point for 1D-myo-inositol 2-(L-cysteinylamino)-2-deoxy-alpha-D-glucopyranoside.

This sequence belongs to the acetyltransferase family. MshD subfamily. In terms of assembly, monomer.

The enzyme catalyses 1D-myo-inositol 2-(L-cysteinylamino)-2-deoxy-alpha-D-glucopyranoside + acetyl-CoA = mycothiol + CoA + H(+). Functionally, catalyzes the transfer of acetyl from acetyl-CoA to desacetylmycothiol (Cys-GlcN-Ins) to form mycothiol. In Rothia mucilaginosa (strain DY-18) (Stomatococcus mucilaginosus), this protein is Mycothiol acetyltransferase.